Here is a 548-residue protein sequence, read N- to C-terminus: Chaperonin GroEL 1 (548 aa).

ATP-binding positions include 30–33 (TLGP), K51, 87–91 (DGTTT), G415, 479–481 (NAA), and D495.

This sequence belongs to the chaperonin (HSP60) family. In terms of assembly, forms a cylinder of 14 subunits composed of two heptameric rings stacked back-to-back. Interacts with the co-chaperonin GroES.

It is found in the cytoplasm. The catalysed reaction is ATP + H2O + a folded polypeptide = ADP + phosphate + an unfolded polypeptide.. Functionally, together with its co-chaperonin GroES, plays an essential role in assisting protein folding. The GroEL-GroES system forms a nano-cage that allows encapsulation of the non-native substrate proteins and provides a physical environment optimized to promote and accelerate protein folding. This chain is Chaperonin GroEL 1, found in Anaeromyxobacter dehalogenans (strain 2CP-C).